A 331-amino-acid polypeptide reads, in one-letter code: Heat-inducible transcription repressor HrcA (331 aa).

It belongs to the HrcA family.

Its function is as follows. Negative regulator of class I heat shock genes (grpE-dnaK-dnaJ and groELS operons). Prevents heat-shock induction of these operons. This Synechococcus sp. (strain WH7803) protein is Heat-inducible transcription repressor HrcA.